A 308-amino-acid chain; its full sequence is SAP30-binding protein (308 aa).

Residues 15-101 (AEYSDPESDG…EAEKRDPQEL (87 aa)) form a disordered region. 4 positions are modified to phosphoserine: Ser-18, Ser-22, Ser-43, and Ser-52. The segment covering 57-78 (DEDGYEEEEDENSKQSEDDDSE) has biased composition (acidic residues). Over residues 79–99 (TEKPEADDPKDNTEAEKRDPQ) the composition is skewed to basic and acidic residues. Lys-95 participates in a covalent cross-link: Glycyl lysine isopeptide (Lys-Gly) (interchain with G-Cter in SUMO2). Ser-113 is subject to Phosphoserine. Glycyl lysine isopeptide (Lys-Gly) (interchain with G-Cter in SUMO2) cross-links involve residues Lys-220, Lys-304, and Lys-305.

This sequence belongs to the HCNGP family. Interacts with histone deacetylase complex subunit SAP30.

The protein localises to the nucleus. Functionally, plays a role in transcriptional repression by promoting histone deacetylase activity, leading to deacetylation of histone H3. May be involved in the regulation of beta-2-microglobulin genes. In Mus musculus (Mouse), this protein is SAP30-binding protein (Sap30bp).